Here is a 391-residue protein sequence, read N- to C-terminus: Saxitoxin and tetrodotoxin-binding protein 1 (391 aa).

Residues 1 to 20 (MGAVPGVVLLLMLAVLGIRA) form the signal peptide. Repeat copies occupy residues 24–202 (PEEC…HKKS) and 203–391 (PEEC…PEQD). N-linked (GlcNAc...) asparagine glycans are attached at residues asparagine 54, asparagine 63, asparagine 97, asparagine 234, asparagine 268, asparagine 277, and asparagine 307.

Homodimer or heterodimer of PSTBP1 and PSTBP2. In terms of processing, glycosylated.

The protein localises to the secreted. Functionally, binds both saxitoxin and tetradotoxin. May play a role in toxin accumulation and/or excretion. This chain is Saxitoxin and tetrodotoxin-binding protein 1 (psbp1), found in Takifugu pardalis (Panther puffer).